Here is a 163-residue protein sequence, read N- to C-terminus: Augmin complex subunit wac (163 aa).

The stretch at 86–115 forms a coiled coil; the sequence is ELQRILSSIEEATRDVVMLERFNAAAEERL.

Component of the augmin complex composed of dgt2, dgt3, dgt4, dgt5, dgt6, msd1, msd5 and wac. The complex interacts directly or indirectly with microtubules and is required for centrosome-independent generation of spindle microtubules. wac interacts directly (via coiled coil) with dgt2. In adult females, detected only in the abdomen with no expression in the head or thorax (at protein level).

It localises to the cytoplasm. The protein resides in the cytoskeleton. It is found in the spindle. Its subcellular location is the spindle pole. Functionally, as part of the augmin complex, plays a role in centrosome-independent generation of spindle microtubules. The complex is required for mitotic spindle assembly through its involvement in localizing gamma-tubulin to spindle microtubules. wac is dispensable for somatic mitosis and for assembly of spindle microtubules in oocytes during female meiosis but is required during female meiosis for chromosome alignment and segregation. It is required for microtubule assembly near spindle poles in oocytes. It is also required for acentrosomal microtubule nucleation and meiotic spindle formation during male meiosis. wac binds to microtubules in vitro. This is Augmin complex subunit wac from Drosophila melanogaster (Fruit fly).